A 279-amino-acid polypeptide reads, in one-letter code: Undecaprenyl-diphosphatase (279 aa).

Helical transmembrane passes span 10–30 (FICF…FLPI), 48–68 (LGVS…IYYF), 96–116 (LFIY…LIKL), 128–148 (GLFS…LSEI), 203–223 (SFLV…FSLF), 229–249 (IDII…IFAI), and 259–279 (NNTL…LTTL).

It belongs to the UppP family.

It is found in the cell inner membrane. It catalyses the reaction di-trans,octa-cis-undecaprenyl diphosphate + H2O = di-trans,octa-cis-undecaprenyl phosphate + phosphate + H(+). Its function is as follows. Catalyzes the dephosphorylation of undecaprenyl diphosphate (UPP). Confers resistance to bacitracin. The polypeptide is Undecaprenyl-diphosphatase (Prochlorococcus marinus (strain NATL1A)).